The chain runs to 75 residues: Metallothionein-like protein 1 (75 aa).

This sequence belongs to the metallothionein superfamily. Type 15 family.

Metallothioneins have a high content of cysteine residues that bind various heavy metals. This Pisum sativum (Garden pea) protein is Metallothionein-like protein 1 (MTA).